The primary structure comprises 199 residues: Holliday junction branch migration complex subunit RuvA (199 aa).

The tract at residues 1–64 (MFAYIKGTVE…EDIAVLYGFG (64 aa)) is domain I. The tract at residues 65-143 (TVEELTMFEM…KEQLTSSIPM (79 aa)) is domain II. Positions 144–151 (TSPENNEV) are flexible linker. Residues 152–199 (TGDSVLSEAVSALMVLGYGSAEASSTISGIYEKGISVEELVKKALKSL) are domain III.

Belongs to the RuvA family. Homotetramer. Forms an RuvA(8)-RuvB(12)-Holliday junction (HJ) complex. HJ DNA is sandwiched between 2 RuvA tetramers; dsDNA enters through RuvA and exits via RuvB. An RuvB hexamer assembles on each DNA strand where it exits the tetramer. Each RuvB hexamer is contacted by two RuvA subunits (via domain III) on 2 adjacent RuvB subunits; this complex drives branch migration. In the full resolvosome a probable DNA-RuvA(4)-RuvB(12)-RuvC(2) complex forms which resolves the HJ.

The protein resides in the cytoplasm. Its function is as follows. The RuvA-RuvB-RuvC complex processes Holliday junction (HJ) DNA during genetic recombination and DNA repair, while the RuvA-RuvB complex plays an important role in the rescue of blocked DNA replication forks via replication fork reversal (RFR). RuvA specifically binds to HJ cruciform DNA, conferring on it an open structure. The RuvB hexamer acts as an ATP-dependent pump, pulling dsDNA into and through the RuvAB complex. HJ branch migration allows RuvC to scan DNA until it finds its consensus sequence, where it cleaves and resolves the cruciform DNA. The protein is Holliday junction branch migration complex subunit RuvA of Ruminiclostridium cellulolyticum (strain ATCC 35319 / DSM 5812 / JCM 6584 / H10) (Clostridium cellulolyticum).